We begin with the raw amino-acid sequence, 516 residues long: Methionine--tRNA ligase (516 aa).

The short motif at F13–H23 is the 'HIGH' region element. Positions K299–S303 match the 'KMSKS' region motif. Residue K302 participates in ATP binding.

The protein belongs to the class-I aminoacyl-tRNA synthetase family. MetG type 2B subfamily. As to quaternary structure, monomer.

The protein localises to the cytoplasm. It carries out the reaction tRNA(Met) + L-methionine + ATP = L-methionyl-tRNA(Met) + AMP + diphosphate. In terms of biological role, is required not only for elongation of protein synthesis but also for the initiation of all mRNA translation through initiator tRNA(fMet) aminoacylation. In Mesorhizobium japonicum (strain LMG 29417 / CECT 9101 / MAFF 303099) (Mesorhizobium loti (strain MAFF 303099)), this protein is Methionine--tRNA ligase.